A 419-amino-acid polypeptide reads, in one-letter code: Serine hydroxymethyltransferase (419 aa).

Residues leucine 121 and 125 to 127 (GHL) each bind (6S)-5,6,7,8-tetrahydrofolate. N6-(pyridoxal phosphate)lysine is present on lysine 230. 355-357 (SPF) contacts (6S)-5,6,7,8-tetrahydrofolate.

The protein belongs to the SHMT family. In terms of assembly, homodimer. The cofactor is pyridoxal 5'-phosphate.

The protein resides in the cytoplasm. It catalyses the reaction (6R)-5,10-methylene-5,6,7,8-tetrahydrofolate + glycine + H2O = (6S)-5,6,7,8-tetrahydrofolate + L-serine. It participates in one-carbon metabolism; tetrahydrofolate interconversion. The protein operates within amino-acid biosynthesis; glycine biosynthesis; glycine from L-serine: step 1/1. Catalyzes the reversible interconversion of serine and glycine with tetrahydrofolate (THF) serving as the one-carbon carrier. This reaction serves as the major source of one-carbon groups required for the biosynthesis of purines, thymidylate, methionine, and other important biomolecules. Also exhibits THF-independent aldolase activity toward beta-hydroxyamino acids, producing glycine and aldehydes, via a retro-aldol mechanism. The protein is Serine hydroxymethyltransferase of Alkalilimnicola ehrlichii (strain ATCC BAA-1101 / DSM 17681 / MLHE-1).